A 260-amino-acid chain; its full sequence is Probable 6-oxopurine nucleoside phosphorylase (260 aa).

Phosphate-binding positions include Ser9 and 49-50; that span reads RH. Met182 serves as a coordination point for substrate. Position 183 (Thr183) interacts with phosphate. 206-208 provides a ligand contact to substrate; sequence NMA.

Belongs to the PNP/MTAP phosphorylase family. MTAP subfamily. In terms of assembly, homohexamer. Dimer of a homotrimer.

The enzyme catalyses a purine D-ribonucleoside + phosphate = a purine nucleobase + alpha-D-ribose 1-phosphate. It participates in purine metabolism; purine nucleoside salvage. Its function is as follows. Purine nucleoside phosphorylase which is highly specific for 6-oxopurine nucleosides. Cleaves guanosine or inosine to respective bases and sugar-1-phosphate molecules. Involved in purine salvage. The polypeptide is Probable 6-oxopurine nucleoside phosphorylase (Moorella thermoacetica (strain ATCC 39073 / JCM 9320)).